Reading from the N-terminus, the 229-residue chain is Small ribosomal subunit protein uS3 (229 aa).

One can recognise a KH type-2 domain in the interval 38–106; the sequence is IREYIENKLF…KVHINVMEVK (69 aa). The segment covering 208-217 has biased composition (acidic residues); it reads PEVDENEETK. The tract at residues 208–229 is disordered; it reads PEVDENEETKEENKEKSEEKSE. Over residues 218 to 229 the composition is skewed to basic and acidic residues; that stretch reads EENKEKSEEKSE.

The protein belongs to the universal ribosomal protein uS3 family. Part of the 30S ribosomal subunit. Forms a tight complex with proteins S10 and S14.

Its function is as follows. Binds the lower part of the 30S subunit head. Binds mRNA in the 70S ribosome, positioning it for translation. This chain is Small ribosomal subunit protein uS3, found in Natranaerobius thermophilus (strain ATCC BAA-1301 / DSM 18059 / JW/NM-WN-LF).